Here is a 355-residue protein sequence, read N- to C-terminus: Protein RecA (355 aa).

Gly65 to Thr72 is a binding site for ATP.

This sequence belongs to the RecA family.

It localises to the cytoplasm. In terms of biological role, can catalyze the hydrolysis of ATP in the presence of single-stranded DNA, the ATP-dependent uptake of single-stranded DNA by duplex DNA, and the ATP-dependent hybridization of homologous single-stranded DNAs. It interacts with LexA causing its activation and leading to its autocatalytic cleavage. This is Protein RecA from Pseudomonas putida (strain W619).